Reading from the N-terminus, the 400-residue chain is Elongation factor Tu 2 (400 aa).

The tr-type G domain occupies 10-209; sequence KPHLNIGTIG…AVDSYIPLPQ (200 aa). Residues 19–26 form a G1 region; it reads GHIDHGKT. 19-26 contributes to the GTP binding site; the sequence is GHIDHGKT. T26 lines the Mg(2+) pocket. A G2 region spans residues 60–64; sequence GITIN. The tract at residues 81–84 is G3; it reads DCPG. Residues 81-85 and 136-139 contribute to the GTP site; these read DCPGH and NKID. The G4 stretch occupies residues 136–139; that stretch reads NKID. The segment at 174–176 is G5; the sequence is SAL.

The protein belongs to the TRAFAC class translation factor GTPase superfamily. Classic translation factor GTPase family. EF-Tu/EF-1A subfamily. In terms of assembly, monomer.

The protein resides in the cytoplasm. It catalyses the reaction GTP + H2O = GDP + phosphate + H(+). GTP hydrolase that promotes the GTP-dependent binding of aminoacyl-tRNA to the A-site of ribosomes during protein biosynthesis. This chain is Elongation factor Tu 2, found in Syntrophomonas wolfei subsp. wolfei (strain DSM 2245B / Goettingen).